The chain runs to 556 residues: Polyphenol oxidase 2 (556 aa).

The Cu cation site is built by His-57, His-81, His-90, His-250, His-254, and His-282. The segment at residues 79–81 (CTH) is a cross-link (2'-(S-cysteinyl)-histidine (Cys-His)). A substrate-binding site is contributed by His-254. The propeptide at 379 to 556 (SKPSSGARNT…FDDVAVHVIN (178 aa)) is removed in mature form.

This sequence belongs to the tyrosinase family. In terms of assembly, heterotetramer. Cu(2+) is required as a cofactor. Post-translationally, the C-ter is probably cleaved after Gly-378 since the mature active protein is smaller than the protein encoded by the gene.

The enzyme catalyses 2 L-dopa + O2 = 2 L-dopaquinone + 2 H2O. It catalyses the reaction L-tyrosine + O2 = L-dopaquinone + H2O. Its function is as follows. Copper-containing oxidase that catalyzes both the o-hydroxylation of monophenols and the subsequent oxidation of the resulting o-diphenols into reactive o-quinones, which evolve spontaneously to produce intermediates, which associate in dark brown pigments. Involved in the initial step of melanin synthesis. Melanins constitute a mechanism of defense and resistance to stress such as UV radiations, free radicals, gamma rays, dehydratation and extreme temperatures, and contribute to the fungal cell-wall resistance against hydrolytic enzymes in avoiding cellular lysis. Fungal pigments are also involved in the formation and stability of spores. The sequence is that of Polyphenol oxidase 2 (PPO2) from Agaricus bisporus (White button mushroom).